A 92-amino-acid polypeptide reads, in one-letter code: Small ribosomal subunit protein uS19 (92 aa).

The protein belongs to the universal ribosomal protein uS19 family.

Its function is as follows. Protein S19 forms a complex with S13 that binds strongly to the 16S ribosomal RNA. This chain is Small ribosomal subunit protein uS19 (rpsS), found in Rickettsia prowazekii (strain Madrid E).